The chain runs to 347 residues: NADH-ubiquinone oxidoreductase chain 2 (347 aa).

The next 11 helical transmembrane spans lie at 3–23 (PLIF…VMIS), 25–45 (HWLM…PVLM), 59–79 (YFLT…INLL), 96–116 (IIMT…FWVP), 122–142 (VSLT…LSVL), 145–165 (IAPV…IMIG), 178–198 (ILAY…IFNP), 202–222 (LLNL…FMTV), 240–260 (ITTS…LTGF), 276–296 (IILA…YMRL), and 326–346 (LSPL…MMIL).

This sequence belongs to the complex I subunit 2 family. Core subunit of respiratory chain NADH dehydrogenase (Complex I) which is composed of 45 different subunits. Interacts with TMEM242.

It localises to the mitochondrion inner membrane. The catalysed reaction is a ubiquinone + NADH + 5 H(+)(in) = a ubiquinol + NAD(+) + 4 H(+)(out). Functionally, core subunit of the mitochondrial membrane respiratory chain NADH dehydrogenase (Complex I) which catalyzes electron transfer from NADH through the respiratory chain, using ubiquinone as an electron acceptor. Essential for the catalytic activity and assembly of complex I. This Peropteryx macrotis (Lesser dog-like bat) protein is NADH-ubiquinone oxidoreductase chain 2.